The following is a 182-amino-acid chain: ATP synthase subunit delta (182 aa).

The protein belongs to the ATPase delta chain family. In terms of assembly, F-type ATPases have 2 components, F(1) - the catalytic core - and F(0) - the membrane proton channel. F(1) has five subunits: alpha(3), beta(3), gamma(1), delta(1), epsilon(1). CF(0) has four main subunits: a(1), b(1), b'(1) and c(10-14). The alpha and beta chains form an alternating ring which encloses part of the gamma chain. F(1) is attached to F(0) by a central stalk formed by the gamma and epsilon chains, while a peripheral stalk is formed by the delta, b and b' chains.

Its subcellular location is the cellular thylakoid membrane. Functionally, f(1)F(0) ATP synthase produces ATP from ADP in the presence of a proton or sodium gradient. F-type ATPases consist of two structural domains, F(1) containing the extramembraneous catalytic core and F(0) containing the membrane proton channel, linked together by a central stalk and a peripheral stalk. During catalysis, ATP synthesis in the catalytic domain of F(1) is coupled via a rotary mechanism of the central stalk subunits to proton translocation. Its function is as follows. This protein is part of the stalk that links CF(0) to CF(1). It either transmits conformational changes from CF(0) to CF(1) or is implicated in proton conduction. The polypeptide is ATP synthase subunit delta (Synechococcus sp. (strain JA-2-3B'a(2-13)) (Cyanobacteria bacterium Yellowstone B-Prime)).